The sequence spans 73 residues: Translation initiation factor IF-1 (73 aa).

The S1-like domain maps to 1-73 (MAKKEDTIVL…TKARVVYRHR (73 aa)).

Belongs to the IF-1 family. In terms of assembly, component of the 30S ribosomal translation pre-initiation complex which assembles on the 30S ribosome in the order IF-2 and IF-3, IF-1 and N-formylmethionyl-tRNA(fMet); mRNA recruitment can occur at any time during PIC assembly.

It is found in the cytoplasm. Functionally, one of the essential components for the initiation of protein synthesis. Stabilizes the binding of IF-2 and IF-3 on the 30S subunit to which N-formylmethionyl-tRNA(fMet) subsequently binds. Helps modulate mRNA selection, yielding the 30S pre-initiation complex (PIC). Upon addition of the 50S ribosomal subunit IF-1, IF-2 and IF-3 are released leaving the mature 70S translation initiation complex. The protein is Translation initiation factor IF-1 of Chlamydia abortus (strain DSM 27085 / S26/3) (Chlamydophila abortus).